A 391-amino-acid polypeptide reads, in one-letter code: ATP phosphoribosyltransferase regulatory subunit (391 aa).

The protein belongs to the class-II aminoacyl-tRNA synthetase family. HisZ subfamily. Heteromultimer composed of HisG and HisZ subunits.

Its subcellular location is the cytoplasm. The protein operates within amino-acid biosynthesis; L-histidine biosynthesis; L-histidine from 5-phospho-alpha-D-ribose 1-diphosphate: step 1/9. Required for the first step of histidine biosynthesis. May allow the feedback regulation of ATP phosphoribosyltransferase activity by histidine. In Bacillus licheniformis (strain ATCC 14580 / DSM 13 / JCM 2505 / CCUG 7422 / NBRC 12200 / NCIMB 9375 / NCTC 10341 / NRRL NRS-1264 / Gibson 46), this protein is ATP phosphoribosyltransferase regulatory subunit.